Reading from the N-terminus, the 710-residue chain is Probable thimet oligopeptidase (710 aa).

Residue histidine 502 coordinates Zn(2+). Glutamate 503 is a catalytic residue. Histidine 506 is a binding site for Zn(2+).

This sequence belongs to the peptidase M3 family. Zn(2+) is required as a cofactor.

The protein localises to the cytoplasm. The enzyme catalyses Preferential cleavage of bonds with hydrophobic residues at P1, P2 and P3' and a small residue at P1' in substrates of 5 to 15 residues.. Its function is as follows. Involved in cytoplasmic peptide degradation. This Arabidopsis thaliana (Mouse-ear cress) protein is Probable thimet oligopeptidase.